The primary structure comprises 1091 residues: Constitutive coactivator of PPAR-gamma-like protein 2 (1091 aa).

Over residues 35–53 (QQQHLHRQLPPAALAPGAP) the composition is skewed to low complexity. Disordered stretches follow at residues 35–105 (QQQH…HPPP), 503–575 (NCLT…SEPH), 966–1010 (SRSS…QGSS), and 1037–1077 (VEEK…KNHV). Residue Arg-57 is modified to Omega-N-methylarginine. The segment covering 82–95 (SRHHHPAHHFHHHG) has biased composition (basic residues). Residues 532 to 544 (GSEQITEAVQQQP) show a composition bias toward polar residues. Residues 966-976 (SRSSRSRGSFG) show a composition bias toward low complexity. Residue Arg-972 is modified to Omega-N-methylarginine. Over residues 1062-1077 (SDDHCLPVKNGEKNHV) the composition is skewed to basic and acidic residues.

The protein belongs to the constitutive coactivator of PPAR-gamma family.

The chain is Constitutive coactivator of PPAR-gamma-like protein 2 (Fam120c) from Mus musculus (Mouse).